We begin with the raw amino-acid sequence, 474 residues long: Probable periplasmic serine endoprotease DegP-like (474 aa).

The signal sequence occupies residues 1–26 (MTRMTRHLALWMLLSLAILASQSAMA). Active-site charge relay system residues include His-116, Asp-146, and Ser-219. Substrate contacts are provided by residues 217-219 (GNS) and 274-278 (LGVMI). PDZ domains follow at residues 263 to 354 (LRND…LRNG) and 360 to 462 (TVTV…YRSG).

It belongs to the peptidase S1C family.

Its subcellular location is the periplasm. The catalysed reaction is Acts on substrates that are at least partially unfolded. The cleavage site P1 residue is normally between a pair of hydrophobic residues, such as Val-|-Val.. Might be efficient in the degradation of transiently denatured and unfolded proteins which accumulate in the periplasm following stress conditions. The sequence is that of Probable periplasmic serine endoprotease DegP-like (mucD) from Halomonas elongata (strain ATCC 33173 / DSM 2581 / NBRC 15536 / NCIMB 2198 / 1H9).